Consider the following 27-residue polypeptide: Small ribosomal subunit protein bTHX (27 aa).

Residues 1–13 show a composition bias toward basic residues; it reads MGKGDRRTRRGKI. The segment at 1–27 is disordered; the sequence is MGKGDRRTRRGKIWRGTYGKYRPRKKK.

Belongs to the bacterial ribosomal protein bTHX family. In terms of assembly, part of the 30S ribosomal subunit.

Binds at the top of the head of the 30S subunit. It stabilizes a number of different RNA elements and thus is important for subunit structure. This chain is Small ribosomal subunit protein bTHX (rpsU), found in Thermus aquaticus.